A 323-amino-acid polypeptide reads, in one-letter code: Large ribosomal subunit protein uL10 (323 aa).

The tract at residues A296 to F323 is disordered. Positions E308–F317 are enriched in acidic residues.

It belongs to the universal ribosomal protein uL10 family. P0 forms a pentameric complex by interaction with dimers of P1 and P2. Post-translationally, phosphorylated.

In terms of biological role, ribosomal protein P0 is the functional equivalent of E.coli protein L10. In Leishmania infantum, this protein is Large ribosomal subunit protein uL10 (LIPO-A).